Consider the following 153-residue polypeptide: Ribosome maturation factor RimP (153 aa).

It belongs to the RimP family.

It is found in the cytoplasm. Its function is as follows. Required for maturation of 30S ribosomal subunits. This is Ribosome maturation factor RimP from Histophilus somni (strain 2336) (Haemophilus somnus).